The following is a 295-amino-acid chain: Cutinase 11 (295 aa).

Residues 1–17 (MQTSALLLAAQALVASA) form the signal peptide. Cys25 and Cys102 are oxidised to a cystine. Catalysis depends on residues Ser113, Asp198, and His210. A disulfide bond links Cys184 and Cys202. The tract at residues 228 to 258 (KLNSGGSPPTTPPTTPPTTPPTTPPTTPPPS) is disordered. The segment covering 236 to 258 (PTTPPTTPPTTPPTTPPTTPPPS) has biased composition (pro residues). In terms of domain architecture, CBM1 spans 260–295 (SCAALYGQCGGQGWNGATCCSQGTCRASNQWYSQCL).

It belongs to the cutinase family. Post-translationally, the 2 disulfide bonds play a critical role in holding the catalytic residues in juxta-position; reduction of the disulfide bridges results in the complete inactivation of the enzyme.

The protein resides in the secreted. The catalysed reaction is cutin + H2O = cutin monomers.. In terms of biological role, catalyzes the hydrolysis of complex carboxylic polyesters found in the cell wall of plants. May degrade cutin, a macromolecule that forms the structure of the plant cuticle. May also degrade suberin, a specialized macromolecule found in the cell wall of various plant tissues. Allows pathogenic fungi to penetrate through the cuticular barrier into the host plant during the initial stage of fungal infection. Involved in pathogenesis. In Verticillium dahliae (Verticillium wilt), this protein is Cutinase 11.